Consider the following 351-residue polypeptide: Histidinol-phosphate aminotransferase (351 aa).

The disordered stretch occupies residues 1 to 26; it reads MRFRAELEPLSPYNPPRASQEAAAER. Position 223 is an N6-(pyridoxal phosphate)lysine (lysine 223).

It belongs to the class-II pyridoxal-phosphate-dependent aminotransferase family. Histidinol-phosphate aminotransferase subfamily. In terms of assembly, homodimer. Pyridoxal 5'-phosphate is required as a cofactor.

The enzyme catalyses L-histidinol phosphate + 2-oxoglutarate = 3-(imidazol-4-yl)-2-oxopropyl phosphate + L-glutamate. It functions in the pathway amino-acid biosynthesis; L-histidine biosynthesis; L-histidine from 5-phospho-alpha-D-ribose 1-diphosphate: step 7/9. The polypeptide is Histidinol-phosphate aminotransferase (Rubrobacter xylanophilus (strain DSM 9941 / JCM 11954 / NBRC 16129 / PRD-1)).